Consider the following 476-residue polypeptide: Phosphomethylpyrimidine synthase (476 aa).

Positions 1 to 27 (MSTQLQHARDGTVTDAMRRVADREGRD) are disordered. The segment covering 7–27 (HARDGTVTDAMRRVADREGRD) has biased composition (basic and acidic residues). Substrate-binding positions include N67, M96, Y125, H160, 180 to 182 (SRG), 221 to 224 (DGLR), and E260. H264 contacts Zn(2+). Y287 contributes to the substrate binding site. H328 contributes to the Zn(2+) binding site. Positions 408, 411, and 416 each coordinate [4Fe-4S] cluster. Positions 425 to 476 (RDAGDDADDMTELTTETDLSESAAAEVNRPPTGTHDAPAAEQAPSPGDDDDD) are disordered. Over residues 436–447 (ELTTETDLSESA) the composition is skewed to low complexity.

This sequence belongs to the ThiC family. [4Fe-4S] cluster serves as cofactor.

It carries out the reaction 5-amino-1-(5-phospho-beta-D-ribosyl)imidazole + S-adenosyl-L-methionine = 4-amino-2-methyl-5-(phosphooxymethyl)pyrimidine + CO + 5'-deoxyadenosine + formate + L-methionine + 3 H(+). The protein operates within cofactor biosynthesis; thiamine diphosphate biosynthesis. Its function is as follows. Catalyzes the synthesis of the hydroxymethylpyrimidine phosphate (HMP-P) moiety of thiamine from aminoimidazole ribotide (AIR) in a radical S-adenosyl-L-methionine (SAM)-dependent reaction. This is Phosphomethylpyrimidine synthase from Halobacterium salinarum (strain ATCC 29341 / DSM 671 / R1).